The chain runs to 353 residues: Photosystem II protein D1 (353 aa).

Position 2 is an N-acetylthreonine (threonine 2). Threonine 2 carries the post-translational modification Phosphothreonine. Transmembrane regions (helical) follow at residues 29 to 46 (YIGW…TATS), 118 to 133 (HFFL…EWEL), and 142 to 156 (WIAV…AATA). Histidine 118 is a binding site for chlorophyll a. Tyrosine 126 contributes to the pheophytin a binding site. Residues aspartate 170 and glutamate 189 each coordinate [CaMn4O5] cluster. Residues 197 to 218 (FHMLGVAGVFGGSLFSAMHGSL) traverse the membrane as a helical segment. Histidine 198 contributes to the chlorophyll a binding site. A quinone is bound by residues histidine 215 and 264–265 (SF). Histidine 215 is a Fe cation binding site. Histidine 272 provides a ligand contact to Fe cation. The chain crosses the membrane as a helical span at residues 274-288 (FLAAWPVVGIWFTAL). 4 residues coordinate [CaMn4O5] cluster: histidine 332, glutamate 333, aspartate 342, and alanine 344. A propeptide spanning residues 345–353 (SVEAPSVNA) is cleaved from the precursor.

The protein belongs to the reaction center PufL/M/PsbA/D family. In terms of assembly, PSII is composed of 1 copy each of membrane proteins PsbA, PsbB, PsbC, PsbD, PsbE, PsbF, PsbH, PsbI, PsbJ, PsbK, PsbL, PsbM, PsbT, PsbX, PsbY, PsbZ, Psb30/Ycf12, at least 3 peripheral proteins of the oxygen-evolving complex and a large number of cofactors. It forms dimeric complexes. Requires The D1/D2 heterodimer binds P680, chlorophylls that are the primary electron donor of PSII, and subsequent electron acceptors. It shares a non-heme iron and each subunit binds pheophytin, quinone, additional chlorophylls, carotenoids and lipids. D1 provides most of the ligands for the Mn4-Ca-O5 cluster of the oxygen-evolving complex (OEC). There is also a Cl(-1) ion associated with D1 and D2, which is required for oxygen evolution. The PSII complex binds additional chlorophylls, carotenoids and specific lipids. as cofactor. Post-translationally, the 9 C-terminal residues are removed, probably by CTPA (AC O04073); processing is essential to allow assembly of the oxygen-evolving complex and thus photosynthetic growth. In terms of processing, tyr-161 forms a radical intermediate that is referred to as redox-active TyrZ, YZ or Y-Z.

It localises to the plastid. The protein resides in the chloroplast thylakoid membrane. It catalyses the reaction 2 a plastoquinone + 4 hnu + 2 H2O = 2 a plastoquinol + O2. Its function is as follows. Photosystem II (PSII) is a light-driven water:plastoquinone oxidoreductase that uses light energy to abstract electrons from H(2)O, generating O(2) and a proton gradient subsequently used for ATP formation. It consists of a core antenna complex that captures photons, and an electron transfer chain that converts photonic excitation into a charge separation. The D1/D2 (PsbA/PsbD) reaction center heterodimer binds P680, the primary electron donor of PSII as well as several subsequent electron acceptors. This chain is Photosystem II protein D1, found in Tetradesmus obliquus (Green alga).